The primary structure comprises 285 residues: Ribosomal RNA small subunit methyltransferase H (285 aa).

S-adenosyl-L-methionine contacts are provided by residues 34-36, D51, F75, D96, and H103; that span reads AGH. The interval 258-285 is disordered; it reads PLVPSEKEAAQNPRARSAKLRAAEKEAP.

This sequence belongs to the methyltransferase superfamily. RsmH family.

Its subcellular location is the cytoplasm. It catalyses the reaction cytidine(1402) in 16S rRNA + S-adenosyl-L-methionine = N(4)-methylcytidine(1402) in 16S rRNA + S-adenosyl-L-homocysteine + H(+). In terms of biological role, specifically methylates the N4 position of cytidine in position 1402 (C1402) of 16S rRNA. In Thermus thermophilus (strain ATCC BAA-163 / DSM 7039 / HB27), this protein is Ribosomal RNA small subunit methyltransferase H.